The chain runs to 359 residues: UDP-N-acetylglucosamine--N-acetylmuramyl-(pentapeptide) pyrophosphoryl-undecaprenol N-acetylglucosamine transferase (359 aa).

UDP-N-acetyl-alpha-D-glucosamine contacts are provided by residues 15 to 17 (TGG), N127, R166, S191, I245, 264 to 269 (ALTVSE), and Q290.

This sequence belongs to the glycosyltransferase 28 family. MurG subfamily.

It is found in the cell inner membrane. The enzyme catalyses di-trans,octa-cis-undecaprenyl diphospho-N-acetyl-alpha-D-muramoyl-L-alanyl-D-glutamyl-meso-2,6-diaminopimeloyl-D-alanyl-D-alanine + UDP-N-acetyl-alpha-D-glucosamine = di-trans,octa-cis-undecaprenyl diphospho-[N-acetyl-alpha-D-glucosaminyl-(1-&gt;4)]-N-acetyl-alpha-D-muramoyl-L-alanyl-D-glutamyl-meso-2,6-diaminopimeloyl-D-alanyl-D-alanine + UDP + H(+). Its pathway is cell wall biogenesis; peptidoglycan biosynthesis. Cell wall formation. Catalyzes the transfer of a GlcNAc subunit on undecaprenyl-pyrophosphoryl-MurNAc-pentapeptide (lipid intermediate I) to form undecaprenyl-pyrophosphoryl-MurNAc-(pentapeptide)GlcNAc (lipid intermediate II). This Pseudomonas entomophila (strain L48) protein is UDP-N-acetylglucosamine--N-acetylmuramyl-(pentapeptide) pyrophosphoryl-undecaprenol N-acetylglucosamine transferase.